The following is a 125-amino-acid chain: Large ribosomal subunit protein uL22 (125 aa).

Belongs to the universal ribosomal protein uL22 family. As to quaternary structure, part of the 50S ribosomal subunit.

In terms of biological role, this protein binds specifically to 23S rRNA; its binding is stimulated by other ribosomal proteins, e.g. L4, L17, and L20. It is important during the early stages of 50S assembly. It makes multiple contacts with different domains of the 23S rRNA in the assembled 50S subunit and ribosome. The globular domain of the protein is located near the polypeptide exit tunnel on the outside of the subunit, while an extended beta-hairpin is found that lines the wall of the exit tunnel in the center of the 70S ribosome. In Acetivibrio thermocellus (strain ATCC 27405 / DSM 1237 / JCM 9322 / NBRC 103400 / NCIMB 10682 / NRRL B-4536 / VPI 7372) (Clostridium thermocellum), this protein is Large ribosomal subunit protein uL22.